Reading from the N-terminus, the 116-residue chain is uncharacterized protein (116 aa).

A helical transmembrane segment spans residues 22 to 42; that stretch reads LIFLVVNLKVPAVGLELFLLV.

The protein localises to the membrane. This is an uncharacterized protein from Saccharomyces cerevisiae (strain ATCC 204508 / S288c) (Baker's yeast).